The following is a 316-amino-acid chain: MSSEGLMVFTGNANPKLAEAVVKHLNIPLGKALVGRFSDGEVQVEIQENVRGKHVFILQSTCAPTNDNLMELMVMVDALKRASARRITAAIPYFGYARQDRRPRSARVAISAKVVANMLEVAGVERVLTMDLHADQIQGFFDIPVDNIYASPILLEDLRKKNYDNLLVVSPDVGGVVRARALAKQLGVDLAIIDKRRPKANVAEVMNIIGEVEGRNCVIMDDMIDTGGTLCKAAQVLKERGAKQVFSYCTHPVLSGGAAARIADSALDEVVVTDTIPLRDDAAQCGKIRQLSTAPLLAETFTRIVRGDSIMSLFAE.

Residues 39 to 41 (DGE) and 98 to 99 (RQ) contribute to the ATP site. Histidine 133 and aspartate 172 together coordinate Mg(2+). Lysine 195 is an active-site residue. Residues arginine 197, aspartate 221, and 225–229 (DTGGT) each bind D-ribose 5-phosphate.

It belongs to the ribose-phosphate pyrophosphokinase family. Class I subfamily. In terms of assembly, homohexamer. Mg(2+) is required as a cofactor.

The protein resides in the cytoplasm. The enzyme catalyses D-ribose 5-phosphate + ATP = 5-phospho-alpha-D-ribose 1-diphosphate + AMP + H(+). The protein operates within metabolic intermediate biosynthesis; 5-phospho-alpha-D-ribose 1-diphosphate biosynthesis; 5-phospho-alpha-D-ribose 1-diphosphate from D-ribose 5-phosphate (route I): step 1/1. In terms of biological role, involved in the biosynthesis of the central metabolite phospho-alpha-D-ribosyl-1-pyrophosphate (PRPP) via the transfer of pyrophosphoryl group from ATP to 1-hydroxyl of ribose-5-phosphate (Rib-5-P). The protein is Ribose-phosphate pyrophosphokinase of Ralstonia nicotianae (strain ATCC BAA-1114 / GMI1000) (Ralstonia solanacearum).